Here is a 376-residue protein sequence, read N- to C-terminus: Thymidine kinase (376 aa).

The interval 1–44 (MASYPGHQHASAFDQAARSRGHSNRRTALRPRRQQEATEVRPEQ) is disordered. The segment covering 19 to 32 (SRGHSNRRTALRPR) has biased composition (basic residues). Positions 33–44 (RQQEATEVRPEQ) are enriched in basic and acidic residues. Residue 56–63 (GPHGMGKT) coordinates ATP. E83 functions as the Proton acceptor in the catalytic mechanism. Residues Y101 and Q125 each coordinate substrate. R216 serves as a coordination point for ATP. Position 222 (R222) interacts with substrate. The tract at residues 260-280 (GQLSGTAVPPQGAEPQSNAGP) is disordered.

The protein belongs to the herpesviridae thymidine kinase family. In terms of assembly, homodimer.

It catalyses the reaction thymidine + ATP = dTMP + ADP + H(+). Its function is as follows. Catalyzes the transfer of the gamma-phospho group of ATP to thymidine to generate dTMP in the salvage pathway of pyrimidine synthesis. The dTMP serves as a substrate for DNA polymerase during viral DNA replication. Allows the virus to be reactivated and to grow in non-proliferative cells lacking a high concentration of phosphorylated nucleic acid precursors. The protein is Thymidine kinase of Human herpesvirus 1 (strain HFEM) (HHV-1).